A 348-amino-acid polypeptide reads, in one-letter code: Lipopolysaccharide heptosyltransferase 2 (348 aa).

Belongs to the glycosyltransferase 9 family.

The catalysed reaction is an L-alpha-D-Hep-(1-&gt;5)-[alpha-Kdo-(2-&gt;4)]-alpha-Kdo-(2-&gt;6)-lipid A + ADP-L-glycero-beta-D-manno-heptose = an L-alpha-D-Hep-(1-&gt;3)-L-alpha-D-Hep-(1-&gt;5)-[alpha-Kdo-(2-&gt;4)]-alpha-Kdo-(2-&gt;6)-lipid A + ADP + H(+). The enzyme catalyses L-alpha-D-Hep-(1-&gt;5)-[alpha-Kdo-(2-&gt;4)]-alpha-Kdo-(2-&gt;6)-lipid A (E. coli) + ADP-L-glycero-beta-D-manno-heptose = L-alpha-D-Hep-(1-&gt;3)-L-alpha-D-Hep-(1-&gt;5)-[alpha-Kdo-(2-&gt;4)]-alpha-Kdo-(2-&gt;6)-lipid A (E. coli) + ADP + H(+). It functions in the pathway bacterial outer membrane biogenesis; LPS core biosynthesis. Glycosyltransferase involved in the biosynthesis of the core oligosaccharide region of lipopolysaccharide (LPS). Catalyzes the addition of the second heptose unit to the heptosyl-Kdo2-lipid A module. The analog ADP-mannose can serve as an alternative donor in place of ADP-L-glycero-D-manno-heptose, but with lower efficiency. This is Lipopolysaccharide heptosyltransferase 2 from Escherichia coli (strain K12).